A 237-amino-acid chain; its full sequence is Large ribosomal subunit protein uL2 (237 aa).

Over residues 1-11 (MGKRIISQNRG) the composition is skewed to polar residues. Disordered stretches follow at residues 1–20 (MGKRIISQNRGKGTPTYRAP) and 201–237 (FGGGKHQHVGKPKTVSRNAPPGRKVGSIAARRTGVRR).

The protein belongs to the universal ribosomal protein uL2 family. As to quaternary structure, part of the 50S ribosomal subunit. Forms a bridge to the 30S subunit in the 70S ribosome.

Its function is as follows. One of the primary rRNA binding proteins. Required for association of the 30S and 50S subunits to form the 70S ribosome, for tRNA binding and peptide bond formation. It has been suggested to have peptidyltransferase activity; this is somewhat controversial. Makes several contacts with the 16S rRNA in the 70S ribosome. The polypeptide is Large ribosomal subunit protein uL2 (Archaeoglobus fulgidus (strain ATCC 49558 / DSM 4304 / JCM 9628 / NBRC 100126 / VC-16)).